A 368-amino-acid chain; its full sequence is 3-dehydroquinate synthase (368 aa).

NAD(+) is bound by residues Asp71–Lys76, Gly105–Asp109, Thr129–Thr130, Lys142, Lys151, and Thr169–Thr172. Zn(2+) contacts are provided by Glu184, His247, and His264.

This sequence belongs to the sugar phosphate cyclases superfamily. Dehydroquinate synthase family. Requires Co(2+) as cofactor. Zn(2+) serves as cofactor. It depends on NAD(+) as a cofactor.

It localises to the cytoplasm. It carries out the reaction 7-phospho-2-dehydro-3-deoxy-D-arabino-heptonate = 3-dehydroquinate + phosphate. Its pathway is metabolic intermediate biosynthesis; chorismate biosynthesis; chorismate from D-erythrose 4-phosphate and phosphoenolpyruvate: step 2/7. Functionally, catalyzes the conversion of 3-deoxy-D-arabino-heptulosonate 7-phosphate (DAHP) to dehydroquinate (DHQ). The chain is 3-dehydroquinate synthase from Cupriavidus pinatubonensis (strain JMP 134 / LMG 1197) (Cupriavidus necator (strain JMP 134)).